We begin with the raw amino-acid sequence, 856 residues long: Serine/threonine-protein kinase unc-51 (856 aa).

The Protein kinase domain occupies 9–275 (YSKRDLLGHG…FEDFFNHPFL (267 aa)). ATP-binding positions include 15–23 (LGHGAFAIV) and K39. D134 serves as the catalytic Proton acceptor. Residues 304–327 (PQSSLPVPKRAGSTKLDSPTPVRR) are disordered. Residues 358 to 361 (FTFL) carry the LIR motif. 3 disordered regions span residues 362-391 (PPRQ…PVPV), 405-471 (LAAA…ERMT), and 520-582 (PTTT…PTEP). Residues 365-385 (QESSPVKQVQVHTNVSPSLTT) show a composition bias toward polar residues. Residues 411 to 436 (TAVPSSSSPTGSAVSAQHQHQHQQQQ) show a composition bias toward low complexity. 2 stretches are compositionally biased toward polar residues: residues 527 to 536 (IPKSATTANI) and 566 to 578 (KYQQ…SPTA). Residues 750 to 856 (YHQCLVRSQE…RQGFVAAVNT (107 aa)) form a required for interaction with unc-14 and vab-8 region.

It belongs to the protein kinase superfamily. Ser/Thr protein kinase family. APG1/unc-51/ULK1 subfamily. In terms of assembly, interacts with unc-14 and vab-8. Interacts (via C-terminus) with atg-13. Interacts (via the LIR motif) with lgg-1; the interaction is direct. Mg(2+) is required as a cofactor.

The catalysed reaction is L-seryl-[protein] + ATP = O-phospho-L-seryl-[protein] + ADP + H(+). It carries out the reaction L-threonyl-[protein] + ATP = O-phospho-L-threonyl-[protein] + ADP + H(+). Its function is as follows. Protein kinase important for axonal elongation and axonal guidance. Functions in the CAN axons to direct both anterior and posterior migrations. Phosphorylates both unc-14 and vab-8. Component of the unc-51/atg-13 complex that is probably recruited by lgg-1 to preautophagosomes and is required for autophagosome formation. Interaction with autophagy related proteins such as atg-13 links it to the autophagy machinery to in turn promote P-granule degradation in somatic cells. Plays a role in mitophagy during limited food availability. Regulates cell size. Plays a role in male tail ray pattern formation. May be required for normal dauer morphogenesis. The sequence is that of Serine/threonine-protein kinase unc-51 from Caenorhabditis elegans.